A 79-amino-acid polypeptide reads, in one-letter code: RNA-binding protein KhpA (79 aa).

Positions glycine 30 to arginine 79 constitute a KH domain.

It belongs to the KhpA RNA-binding protein family.

It localises to the cytoplasm. It is found in the nucleoid. A probable RNA-binding protein. The polypeptide is RNA-binding protein KhpA (Streptomyces coelicolor (strain ATCC BAA-471 / A3(2) / M145)).